A 535-amino-acid chain; its full sequence is Probable monogalactosyldiacylglycerol synthase, chloroplastic (535 aa).

The N-terminal 113 residues, 1 to 113 (MMQHSSSVTQ…KIPLGFASVG (113 aa)), are a transit peptide targeting the chloroplast.

Belongs to the glycosyltransferase 28 family.

The protein localises to the plastid. The protein resides in the chloroplast membrane. The catalysed reaction is a 1,2-diacyl-sn-glycerol + UDP-alpha-D-galactose = a 1,2-diacyl-3-O-(beta-D-galactosyl)-sn-glycerol + UDP + H(+). Involved in the synthesis of the major structural component of photosynthetic membranes. This chain is Probable monogalactosyldiacylglycerol synthase, chloroplastic (MGD A), found in Nicotiana tabacum (Common tobacco).